The primary structure comprises 338 residues: MSEVEGGIINRKLQGEFVNTFIRQLKFHREDFKNIGYIGGFTSIIDMGNFGITFNNDGVGTKAMIAEAVNKYDTLGIDCVAMNVNDAITVGSEPIAMVDYLAVNKMDEEMAKQLGTGFNVGAQMANISIVGGETAVLPDVVKHIDISGAVIGIVQKNQIITGSNIKEGDVIIGLGSSGLHSNGFTTVRKIIADNNLDLQDTFPGDSKKTYEVLLEPTRIYVREILDIMGIITIKGMANITGGGFKNITRMKDMKYVIDDPFEPQNVFIRLMEMGNLNYAQMFEIFNMGTGFVLVIDEDEKVDIMNALKGKVPVKVMGHVENGSGVEIPKYEVSLKGYY.

The protein belongs to the AIR synthase family.

The protein localises to the cytoplasm. The catalysed reaction is 2-formamido-N(1)-(5-O-phospho-beta-D-ribosyl)acetamidine + ATP = 5-amino-1-(5-phospho-beta-D-ribosyl)imidazole + ADP + phosphate + H(+). It functions in the pathway purine metabolism; IMP biosynthesis via de novo pathway; 5-amino-1-(5-phospho-D-ribosyl)imidazole from N(2)-formyl-N(1)-(5-phospho-D-ribosyl)glycinamide: step 2/2. The protein is Phosphoribosylformylglycinamidine cyclo-ligase of Thermoplasma acidophilum (strain ATCC 25905 / DSM 1728 / JCM 9062 / NBRC 15155 / AMRC-C165).